Consider the following 186-residue polypeptide: Threonylcarbamoyl-AMP synthase (186 aa).

The YrdC-like domain occupies 6 to 186; sequence GFRLRLAANA…FDAMSGRRIR (181 aa).

This sequence belongs to the SUA5 family. TsaC subfamily.

The protein localises to the cytoplasm. The enzyme catalyses L-threonine + hydrogencarbonate + ATP = L-threonylcarbamoyladenylate + diphosphate + H2O. Required for the formation of a threonylcarbamoyl group on adenosine at position 37 (t(6)A37) in tRNAs that read codons beginning with adenine. Catalyzes the conversion of L-threonine, HCO(3)(-)/CO(2) and ATP to give threonylcarbamoyl-AMP (TC-AMP) as the acyladenylate intermediate, with the release of diphosphate. This chain is Threonylcarbamoyl-AMP synthase, found in Methylococcus capsulatus (strain ATCC 33009 / NCIMB 11132 / Bath).